Consider the following 903-residue polypeptide: Protein translocase subunit SecA (903 aa).

ATP-binding positions include glutamine 85, 103 to 107 (GEGKT), and aspartate 492. The tract at residues 863–890 (GDGVKQPVRRDKKVGRNSPCPCGSGKKY) is disordered. The Zn(2+) site is built by cysteine 882, cysteine 884, cysteine 893, and cysteine 894.

The protein belongs to the SecA family. In terms of assembly, monomer and homodimer. Part of the essential Sec protein translocation apparatus which comprises SecA, SecYEG and auxiliary proteins SecDF. Other proteins may also be involved. Requires Zn(2+) as cofactor.

Its subcellular location is the cell membrane. The protein localises to the cytoplasm. It catalyses the reaction ATP + H2O + cellular proteinSide 1 = ADP + phosphate + cellular proteinSide 2.. Part of the Sec protein translocase complex. Interacts with the SecYEG preprotein conducting channel. Has a central role in coupling the hydrolysis of ATP to the transfer of proteins into and across the cell membrane, serving as an ATP-driven molecular motor driving the stepwise translocation of polypeptide chains across the membrane. In Desulforudis audaxviator (strain MP104C), this protein is Protein translocase subunit SecA.